We begin with the raw amino-acid sequence, 549 residues long: Oxygen-dependent choline dehydrogenase (549 aa).

4–33 serves as a coordination point for FAD; the sequence is DFVIIGSGSAGSALAYRLSEDGRNSVIVLE. Catalysis depends on histidine 465, which acts as the Proton acceptor.

The protein belongs to the GMC oxidoreductase family. The cofactor is FAD.

It localises to the cell membrane. It catalyses the reaction choline + A = betaine aldehyde + AH2. It carries out the reaction betaine aldehyde + NAD(+) + H2O = glycine betaine + NADH + 2 H(+). The protein operates within amine and polyamine biosynthesis; betaine biosynthesis via choline pathway; betaine aldehyde from choline (cytochrome c reductase route): step 1/1. Involved in the biosynthesis of the osmoprotectant glycine betaine. Catalyzes the oxidation of choline to betaine aldehyde and betaine aldehyde to glycine betaine at the same rate. The sequence is that of Oxygen-dependent choline dehydrogenase from Rhizobium meliloti (strain 1021) (Ensifer meliloti).